The following is a 38-amino-acid chain: Large ribosomal subunit protein bL36 (38 aa).

It belongs to the bacterial ribosomal protein bL36 family.

The polypeptide is Large ribosomal subunit protein bL36 (Psychrobacter arcticus (strain DSM 17307 / VKM B-2377 / 273-4)).